The chain runs to 451 residues: Coproporphyrinogen III oxidase (451 aa).

FAD contacts are provided by residues 10-15 (GGGISG), 36-37 (DP), 58-61 (GAEA), V242, W393, and 429-431 (IGV).

Belongs to the protoporphyrinogen/coproporphyrinogen oxidase family. Coproporphyrinogen III oxidase subfamily. The cofactor is FAD.

It localises to the cytoplasm. It catalyses the reaction coproporphyrinogen III + 3 O2 = coproporphyrin III + 3 H2O2. The protein operates within porphyrin-containing compound metabolism; protoheme biosynthesis. In terms of biological role, involved in coproporphyrin-dependent heme b biosynthesis. Catalyzes the oxidation of coproporphyrinogen III to coproporphyrin III. The polypeptide is Coproporphyrinogen III oxidase (Mycobacterium leprae (strain TN)).